The chain runs to 120 residues: UPF0231 protein CKO_03249 (120 aa).

This sequence belongs to the UPF0231 family.

The sequence is that of UPF0231 protein CKO_03249 from Citrobacter koseri (strain ATCC BAA-895 / CDC 4225-83 / SGSC4696).